The sequence spans 306 residues: Agmatinase (306 aa).

Histidine 126, aspartate 149, histidine 151, aspartate 153, aspartate 230, and aspartate 232 together coordinate Mn(2+).

The protein belongs to the arginase family. Agmatinase subfamily. The cofactor is Mn(2+).

The enzyme catalyses agmatine + H2O = urea + putrescine. The protein operates within amine and polyamine biosynthesis; putrescine biosynthesis via agmatine pathway; putrescine from agmatine: step 1/1. Its function is as follows. Catalyzes the formation of putrescine from agmatine. The protein is Agmatinase of Serratia proteamaculans (strain 568).